The primary structure comprises 507 residues: ATP synthase subunit alpha, chloroplastic (507 aa).

170-177 provides a ligand contact to ATP; it reads GDRQTGKT.

Belongs to the ATPase alpha/beta chains family. As to quaternary structure, F-type ATPases have 2 components, CF(1) - the catalytic core - and CF(0) - the membrane proton channel. CF(1) has five subunits: alpha(3), beta(3), gamma(1), delta(1), epsilon(1). CF(0) has four main subunits: a, b, b' and c.

It localises to the plastid. The protein resides in the chloroplast thylakoid membrane. The catalysed reaction is ATP + H2O + 4 H(+)(in) = ADP + phosphate + 5 H(+)(out). Produces ATP from ADP in the presence of a proton gradient across the membrane. The alpha chain is a regulatory subunit. This chain is ATP synthase subunit alpha, chloroplastic, found in Illicium oligandrum (Star anise).